Reading from the N-terminus, the 169-residue chain is Shikimate kinase (169 aa).

12 to 17 (GAGKST) serves as a coordination point for ATP. Mg(2+) is bound at residue Ser-16. Residues Asp-34, Arg-58, and Gly-80 each coordinate substrate. Arg-117 serves as a coordination point for ATP. Substrate is bound at residue Arg-136.

It belongs to the shikimate kinase family. Monomer. The cofactor is Mg(2+).

The protein localises to the cytoplasm. The enzyme catalyses shikimate + ATP = 3-phosphoshikimate + ADP + H(+). It participates in metabolic intermediate biosynthesis; chorismate biosynthesis; chorismate from D-erythrose 4-phosphate and phosphoenolpyruvate: step 5/7. Functionally, catalyzes the specific phosphorylation of the 3-hydroxyl group of shikimic acid using ATP as a cosubstrate. The sequence is that of Shikimate kinase from Rhodococcus erythropolis (strain PR4 / NBRC 100887).